The primary structure comprises 405 residues: uncharacterized protein (405 aa).

The signal sequence occupies residues 1-34 (MNKFLKYFLILLALVLIVVPIVFATLLFKTSQDA). A compositionally biased stretch (basic and acidic residues) spans 348 to 359 (EQNDTTDKDKTS). The interval 348-405 (EQNDTTDKDKTSNENSDSTNNSDSSNQQQPATDQNSNQNQGGTQQAPQASNNQNGVVN) is disordered. 2 stretches are compositionally biased toward low complexity: residues 360–373 (NENSDSTNNSDSSN) and 381–392 (QNSNQNQGGTQQ). Positions 393–405 (APQASNNQNGVVN) are enriched in polar residues.

Belongs to the LytR/CpsA/Psr (LCP) family.

This is an uncharacterized protein from Staphylococcus aureus (strain NCTC 8325 / PS 47).